We begin with the raw amino-acid sequence, 509 residues long: Serine/threonine protein kinase OSK4 (509 aa).

The Protein kinase domain occupies 17–269 (YNLGRTLGIG…IREIREHQWF (253 aa)). ATP-binding positions include 23–31 (LGIGSFGKV) and K46. The Proton acceptor role is filled by D140. The UBA domain maps to 290-330 (MIDEDTLQDVVNLGYEKDHVCESLRNRLQNEATVAYYLLLD). Residues 460-508 (NGRLPAVIKFEIQLYKSRDEKYLLDMQRVTGPQLLFLDFCAAFLTKLRV) enclose the KA1 domain.

This sequence belongs to the protein kinase superfamily. Ser/Thr protein kinase family. Interacts with HDR1. Strongly expressed in immature seeds. Mostly expressed in panicles, leaf sheaths and roots, and to a lower extent, in germinating seeds and leaf blades.

The protein localises to the nucleus. It carries out the reaction L-seryl-[protein] + ATP = O-phospho-L-seryl-[protein] + ADP + H(+). The enzyme catalyses L-threonyl-[protein] + ATP = O-phospho-L-threonyl-[protein] + ADP + H(+). Functionally, suppressor of flowering in long days (LD) via the that up-regulation of HD1 and the down-regulation of EHD1. Can phosphorylate HD1 in the presence of HDR1. This Oryza sativa subsp. indica (Rice) protein is Serine/threonine protein kinase OSK4.